A 375-amino-acid polypeptide reads, in one-letter code: Succinyl-diaminopimelate desuccinylase (375 aa).

H66 contacts Zn(2+). Residue D68 is part of the active site. D99 lines the Zn(2+) pocket. E133 functions as the Proton acceptor in the catalytic mechanism. Zn(2+) contacts are provided by E134, E162, and H348.

It belongs to the peptidase M20A family. DapE subfamily. In terms of assembly, homodimer. The cofactor is Zn(2+). Requires Co(2+) as cofactor.

It catalyses the reaction N-succinyl-(2S,6S)-2,6-diaminopimelate + H2O = (2S,6S)-2,6-diaminopimelate + succinate. It functions in the pathway amino-acid biosynthesis; L-lysine biosynthesis via DAP pathway; LL-2,6-diaminopimelate from (S)-tetrahydrodipicolinate (succinylase route): step 3/3. In terms of biological role, catalyzes the hydrolysis of N-succinyl-L,L-diaminopimelic acid (SDAP), forming succinate and LL-2,6-diaminopimelate (DAP), an intermediate involved in the bacterial biosynthesis of lysine and meso-diaminopimelic acid, an essential component of bacterial cell walls. This chain is Succinyl-diaminopimelate desuccinylase, found in Shigella sonnei (strain Ss046).